A 368-amino-acid polypeptide reads, in one-letter code: Multifunctional CCA protein (368 aa).

ATP is bound by residues G8 and R11. The CTP site is built by G8 and R11. Positions 21 and 23 each coordinate Mg(2+). Residues R91, R137, and R140 each contribute to the ATP site. CTP contacts are provided by R91, R137, and R140.

The protein belongs to the tRNA nucleotidyltransferase/poly(A) polymerase family. Bacterial CCA-adding enzyme type 1 subfamily. As to quaternary structure, monomer. Can also form homodimers and oligomers. Mg(2+) is required as a cofactor. The cofactor is Ni(2+).

It catalyses the reaction a tRNA precursor + 2 CTP + ATP = a tRNA with a 3' CCA end + 3 diphosphate. The catalysed reaction is a tRNA with a 3' CCA end + 2 CTP + ATP = a tRNA with a 3' CCACCA end + 3 diphosphate. In terms of biological role, catalyzes the addition and repair of the essential 3'-terminal CCA sequence in tRNAs without using a nucleic acid template. Adds these three nucleotides in the order of C, C, and A to the tRNA nucleotide-73, using CTP and ATP as substrates and producing inorganic pyrophosphate. tRNA 3'-terminal CCA addition is required both for tRNA processing and repair. Also involved in tRNA surveillance by mediating tandem CCA addition to generate a CCACCA at the 3' terminus of unstable tRNAs. While stable tRNAs receive only 3'-terminal CCA, unstable tRNAs are marked with CCACCA and rapidly degraded. In Pseudomonas putida (strain ATCC 47054 / DSM 6125 / CFBP 8728 / NCIMB 11950 / KT2440), this protein is Multifunctional CCA protein.